A 542-amino-acid chain; its full sequence is Chitinase 1 (542 aa).

Residues 68–506 (FNVLCYFTDW…NAAHEGLKRR (439 aa)) form the GH18 domain. Chitin contacts are provided by residues 186 to 187 (QE) and 213 to 216 (GGWS). Glutamate 256 functions as the Proton donor in the catalytic mechanism. Residues tyrosine 257, 323–326 (MTYD), and tryptophan 486 contribute to the chitin site.

Belongs to the glycosyl hydrolase 18 family. Semipurified toxin complex consists of at least YenA1-YenA2-YenB-YenC1-YenC2-Chi1-Chi2. The Yen-TC:K9 subcomplex is about 26 nm tall and 22 nm in diameter with 5-fold symmetry and 5 copies of YenA1, YenA2, Chi1 and Chi2; the chitinase subunits may be solvent accessible on the exterior the complex. The Yen-TC:K9 subcomplex has no insecticidal activity. The native complex with additional YenB, YenC1 and YenC2 subunits is 16 nm taller and is insecticidal; the toxicity-conferring subunits are present at about 1 copy each.

Its subcellular location is the secreted. The enzyme catalyses Random endo-hydrolysis of N-acetyl-beta-D-glucosaminide (1-&gt;4)-beta-linkages in chitin and chitodextrins.. Toxin complex is secreted when grown at 25 degrees Celsius or less; at higher temperatures the proteins are present intracellularly but not secreted. Part of an orally active toxin complex (TC) with strong insecticidal effects on larvae of the Coleoptera Costelytra zealandica, Acrossidius tasmania and Adoryphorus couloni and some Lepidoptera larvae. The TC has an endochitinase activity. This subunit might aid infection by degradation of the larval peritrophic membrane. This chain is Chitinase 1, found in Yersinia entomophaga.